The primary structure comprises 639 residues: Complex I assembly factor Egm, mitochondrial (639 aa).

A mitochondrion-targeting transit peptide spans 1–26; that stretch reads MRPNLFSGASRLLTYSRNGKLLTRGR. Residues 23–65 are disordered; the sequence is TRGRSTKATSSSLDSQHQDAATTEGGRAESVEESPEQQRKLPT. Over residues 28 to 43 the composition is skewed to polar residues; the sequence is TKATSSSLDSQHQDAA. Basic and acidic residues predominate over residues 48 to 65; that stretch reads GRAESVEESPEQQRKLPT.

It belongs to the acyl-CoA dehydrogenase family. Associates with mitochondrial complex I assembly intermediates during its biogenesis. It depends on FAD as a cofactor.

The protein resides in the mitochondrion. Functionally, as part of the MCIA complex, primarily participates in the assembly of the mitochondrial complex I and therefore plays a role in oxidative phosphorylation. In Drosophila melanogaster (Fruit fly), this protein is Complex I assembly factor Egm, mitochondrial.